The sequence spans 239 residues: ATP-dependent dethiobiotin synthetase BioD (239 aa).

15 to 20 (EIGKTF) lines the ATP pocket. Residue Thr19 participates in Mg(2+) binding. Lys40 is an active-site residue. Residues Asp57, 118 to 121 (EGVG), 178 to 179 (NH), and 211 to 213 (AHL) contribute to the ATP site. Mg(2+)-binding residues include Asp57 and Glu118.

This sequence belongs to the dethiobiotin synthetase family. As to quaternary structure, homodimer. Mg(2+) serves as cofactor.

It localises to the cytoplasm. The catalysed reaction is (7R,8S)-7,8-diammoniononanoate + CO2 + ATP = (4R,5S)-dethiobiotin + ADP + phosphate + 3 H(+). It participates in cofactor biosynthesis; biotin biosynthesis; biotin from 7,8-diaminononanoate: step 1/2. Its function is as follows. Catalyzes a mechanistically unusual reaction, the ATP-dependent insertion of CO2 between the N7 and N8 nitrogen atoms of 7,8-diaminopelargonic acid (DAPA, also called 7,8-diammoniononanoate) to form a ureido ring. The protein is ATP-dependent dethiobiotin synthetase BioD of Burkholderia ambifaria (strain MC40-6).